The chain runs to 1381 residues: DNA-directed RNA polymerase subunit beta'' (1381 aa).

Residues Cys224, Cys295, Cys302, and Cys305 each coordinate Zn(2+).

Belongs to the RNA polymerase beta' chain family. RpoC2 subfamily. In plastids the minimal PEP RNA polymerase catalytic core is composed of four subunits: alpha, beta, beta', and beta''. When a (nuclear-encoded) sigma factor is associated with the core the holoenzyme is formed, which can initiate transcription. The cofactor is Zn(2+).

Its subcellular location is the plastid. The protein resides in the chloroplast. It carries out the reaction RNA(n) + a ribonucleoside 5'-triphosphate = RNA(n+1) + diphosphate. In terms of biological role, DNA-dependent RNA polymerase catalyzes the transcription of DNA into RNA using the four ribonucleoside triphosphates as substrates. This chain is DNA-directed RNA polymerase subunit beta'', found in Lactuca sativa (Garden lettuce).